Here is a 186-residue protein sequence, read N- to C-terminus: Ribosome-recycling factor (186 aa).

This sequence belongs to the RRF family.

The protein localises to the cytoplasm. In terms of biological role, responsible for the release of ribosomes from messenger RNA at the termination of protein biosynthesis. May increase the efficiency of translation by recycling ribosomes from one round of translation to another. This is Ribosome-recycling factor from Rubrobacter xylanophilus (strain DSM 9941 / JCM 11954 / NBRC 16129 / PRD-1).